A 146-amino-acid polypeptide reads, in one-letter code: UPF0260 protein Swoo_2117 (146 aa).

The protein belongs to the UPF0260 family.

The polypeptide is UPF0260 protein Swoo_2117 (Shewanella woodyi (strain ATCC 51908 / MS32)).